A 71-amino-acid polypeptide reads, in one-letter code: MANLKAVFLICIVAFIALQCVVAEPAAEDSVVVKRSIGSALKKALPVAKKIGKIALPIAKAALPVAAGLVG.

Residues 1 to 23 (MANLKAVFLICIVAFIALQCVVA) form the signal peptide. 2 propeptides span residues 24–35 (EPAAEDSVVVKR) and 65–71 (VAAGLVG).

Homomer of four to six subunits.

The protein localises to the secreted. Functionally, female-specific peptides with potent activity against Gram-positive and Gram-negative bacteria. They have as well hemolytic activity. The sequence is that of Ceratotoxin-A (CTXA1) from Ceratitis capitata (Mediterranean fruit fly).